We begin with the raw amino-acid sequence, 772 residues long: Protein U58 (772 aa).

Belongs to the herpesviridae UL87 family.

The polypeptide is Protein U58 (U58) (Homo sapiens (Human)).